Consider the following 215-residue polypeptide: Pyrrolidone-carboxylate peptidase 1 (215 aa).

Active-site residues include Glu-80, Cys-143, and His-167.

The protein belongs to the peptidase C15 family. Homotetramer.

It localises to the cytoplasm. The catalysed reaction is Release of an N-terminal pyroglutamyl group from a polypeptide, the second amino acid generally not being Pro.. Its function is as follows. Removes 5-oxoproline from various penultimate amino acid residues except L-proline. This chain is Pyrrolidone-carboxylate peptidase 1, found in Ralstonia nicotianae (strain ATCC BAA-1114 / GMI1000) (Ralstonia solanacearum).